Here is a 478-residue protein sequence, read N- to C-terminus: Protein WVD2-like 7 (478 aa).

Disordered stretches follow at residues 201–326 (DSAL…TGST) and 385–420 (PMPS…SASI). The span at 208–217 (AGSKLDEHAS) shows a compositional bias: basic and acidic residues. 2 stretches are compositionally biased toward polar residues: residues 219 to 232 (KPSN…SSVN) and 264 to 277 (GSSL…NVDA). The span at 278-289 (KSQKELRPKKTI) shows a compositional bias: basic and acidic residues. 2 stretches are compositionally biased toward polar residues: residues 309–326 (RCKT…TGST) and 407–420 (VAQS…SASI).

It belongs to the TPX2 family. Expressed in seedlings.

The protein resides in the cytoplasm. It is found in the cytoskeleton. Its function is as follows. Microtubule-associated protein (MAP) that regulates the orientation of interphase cortical microtubules. The chain is Protein WVD2-like 7 from Arabidopsis thaliana (Mouse-ear cress).